The following is a 345-amino-acid chain: UbiA prenyltransferase domain-containing protein 1 (345 aa).

8 consecutive transmembrane segments (helical) span residues 60-80 (LALR…GTAI), 90-110 (LLLF…GNLV), 141-161 (VRFG…LYFI), 169-189 (LALI…GIGF), 213-233 (AVQV…LALS), 251-273 (QAGI…YNLL), 285-305 (ATRY…AFSL), and 324-344 (LNLL…AGSL).

The protein belongs to the UbiA prenyltransferase family.

The protein resides in the endoplasmic reticulum membrane. It is found in the golgi apparatus membrane. It localises to the mitochondrion membrane. The catalysed reaction is menadiol + (2E,6E,10E)-geranylgeranyl diphosphate = menaquinol-4 + diphosphate. It catalyses the reaction all-trans-decaprenyl diphosphate + 4-hydroxybenzoate = 4-hydroxy-3-(all-trans-decaprenyl)benzoate + diphosphate. It participates in quinol/quinone metabolism; menaquinone biosynthesis. Its pathway is cofactor biosynthesis; ubiquinone biosynthesis. Prenyltransferase that mediates the formation of menaquinone-4 (MK-4) and coenzyme Q10. MK-4 is a vitamin K2 isoform required for endothelial cell development. Mediates the conversion of phylloquinone (PK) into MK-4, probably by cleaving the side chain of phylloquinone (PK) to release 2-methyl-1,4-naphthoquinone (menadione; K3) and then prenylating it with geranylgeranyl pyrophosphate (GGPP) to form MK-4. Also plays a role in cardiovascular development independently of MK-4 biosynthesis, by acting as a coenzyme Q10 biosynthetic enzyme: coenzyme Q10, also named ubiquinone, plays an important antioxidant role in the cardiovascular system. Mediates biosynthesis of coenzyme Q10 in the Golgi membrane, leading to protect cardiovascular tissues from NOS3/eNOS-dependent oxidative stress. In Xenopus tropicalis (Western clawed frog), this protein is UbiA prenyltransferase domain-containing protein 1 (ubiad1).